Consider the following 195-residue polypeptide: PRELI domain containing protein 3B (195 aa).

A PRELI/MSF1 domain is found at 1 to 172; the sequence is MKIWTSEHVF…VIHKLNAEIE (172 aa). Phosphoserine is present on residues Ser46 and Ser51.

The protein belongs to the slowmo family.

This Rattus norvegicus (Rat) protein is PRELI domain containing protein 3B (Prelid3b).